Reading from the N-terminus, the 299-residue chain is MDNKSQRRNNENQKKVEALDFLSFMRRPNCIAEILRQHTQIIEESNNYYYLKMKTKDNKSQGPLRSLLCLPKNVNQKTDSAFCSVDGYNVKNKFLCTRSPNQDSLYQFWSMAYKKNIHIIVMLSPIDNLMRHRYWSLEEDEVFECREFRIETLQVDVQAFYITTTLQLKHENGAVRKIVHFNYTGWPVDNISHHPKEFISFILTVNSARDEVDKLSARNSHTLGPIMVHCSDGFNNSCVYCLLDICISEFGATSNVSVPNTFSKIRQQNRHAISQPENYVYCYQALYVWISSISNSLHH.

A Tyrosine-protein phosphatase domain is found at 16–289 (VEALDFLSFM…VYCYQALYVW (274 aa)). Catalysis depends on cysteine 230, which acts as the Phosphocysteine intermediate.

This sequence belongs to the protein-tyrosine phosphatase family.

The catalysed reaction is O-phospho-L-tyrosyl-[protein] + H2O = L-tyrosyl-[protein] + phosphate. The protein is Probable tyrosine phosphatase protein J4 (J5) of Microplitis demolitor bracovirus (isolate Webb) (MdBV).